The following is a 923-amino-acid chain: Ubiquitin carboxyl-terminal hydrolase 10 (923 aa).

In terms of domain architecture, DUSP spans 19–134; it reads FTPEEEKRIV…GGPPIERKLI (116 aa). Residues 65–91 are disordered; that stretch reads NECSTGESSEAPRPGPIDNHDIIESDS. Residues 304-895 enclose the USP domain; sequence AGLSNLGNTC…AAYVLFYRRV (592 aa). The Nucleophile role is filled by cysteine 313. The Proton acceptor role is filled by histidine 853.

This sequence belongs to the peptidase C19 family.

It carries out the reaction Thiol-dependent hydrolysis of ester, thioester, amide, peptide and isopeptide bonds formed by the C-terminal Gly of ubiquitin (a 76-residue protein attached to proteins as an intracellular targeting signal).. Functionally, recognizes and hydrolyzes the peptide bond at the C-terminal Gly of ubiquitin. Involved in the processing of poly-ubiquitin precursors as well as that of ubiquitinated proteins. The sequence is that of Ubiquitin carboxyl-terminal hydrolase 10 (UBP10) from Arabidopsis thaliana (Mouse-ear cress).